A 427-amino-acid polypeptide reads, in one-letter code: Glutamate-1-semialdehyde 2,1-aminomutase (427 aa).

Lys265 carries the post-translational modification N6-(pyridoxal phosphate)lysine.

This sequence belongs to the class-III pyridoxal-phosphate-dependent aminotransferase family. HemL subfamily. In terms of assembly, homodimer. It depends on pyridoxal 5'-phosphate as a cofactor.

The protein resides in the cytoplasm. It carries out the reaction (S)-4-amino-5-oxopentanoate = 5-aminolevulinate. It functions in the pathway porphyrin-containing compound metabolism; protoporphyrin-IX biosynthesis; 5-aminolevulinate from L-glutamyl-tRNA(Glu): step 2/2. This Bordetella parapertussis (strain 12822 / ATCC BAA-587 / NCTC 13253) protein is Glutamate-1-semialdehyde 2,1-aminomutase.